Here is a 103-residue protein sequence, read N- to C-terminus: MTYKIGVVGDKDSVSPFRLFGFDVQHGTTKTEIRKTIDEMAKNEYGVIYITEQCANLVPETIERYKGQLTPAIILIPSHQGTLGIGLEEIQNSVEKAVGQNIL.

This sequence belongs to the V-ATPase F subunit family.

Its function is as follows. Involved in ATP-driven sodium extrusion. The chain is V-type sodium ATPase subunit G (ntpG) from Enterococcus hirae (strain ATCC 9790 / DSM 20160 / JCM 8729 / LMG 6399 / NBRC 3181 / NCIMB 6459 / NCDO 1258 / NCTC 12367 / WDCM 00089 / R).